We begin with the raw amino-acid sequence, 408 residues long: Succinylornithine transaminase (408 aa).

Lysine 252 carries the post-translational modification N6-(pyridoxal phosphate)lysine.

It belongs to the class-III pyridoxal-phosphate-dependent aminotransferase family. AstC subfamily. Pyridoxal 5'-phosphate serves as cofactor.

It catalyses the reaction N(2)-succinyl-L-ornithine + 2-oxoglutarate = N-succinyl-L-glutamate 5-semialdehyde + L-glutamate. It functions in the pathway amino-acid degradation; L-arginine degradation via AST pathway; L-glutamate and succinate from L-arginine: step 3/5. Functionally, catalyzes the transamination of N(2)-succinylornithine and alpha-ketoglutarate into N(2)-succinylglutamate semialdehyde and glutamate. Can also act as an acetylornithine aminotransferase. This chain is Succinylornithine transaminase, found in Salmonella newport (strain SL254).